The primary structure comprises 440 residues: Transposon TyH3 Gag polyprotein (440 aa).

Composition is skewed to polar residues over residues 1–23 (MESQ…SVTS), 48–60 (TKAN…TPAS), and 127–152 (QSQF…GNTF). Disordered stretches follow at residues 1 to 93 (MESQ…MMTQ), 126 to 173 (PQSQ…RPPP), and 352 to 440 (GSRN…PETY). Over residues 153–165 (TDSSSADSDMTST) the composition is skewed to low complexity. The segment at 299 to 401 (NNGIHINNKV…NSKSKTARAH (103 aa)) is RNA-binding. Positions 402–418 (NVSTSNNSPSTDNDSIS) are enriched in low complexity. Ser-416 carries the phosphoserine modification. Positions 419–428 (KSTTEPIQLN) are enriched in polar residues. Residues 429–440 (NKHDLHLRPETY) show a composition bias toward basic and acidic residues.

Homotrimer.

It is found in the cytoplasm. Its function is as follows. Capsid protein (CA) is the structural component of the virus-like particle (VLP), forming the shell that encapsulates the retrotransposons dimeric RNA genome. The particles are assembled from trimer-clustered units and there are holes in the capsid shells that allow for the diffusion of macromolecules. CA also has nucleocapsid-like chaperone activity, promoting primer tRNA(i)-Met annealing to the multipartite primer-binding site (PBS), dimerization of Ty1 RNA and initiation of reverse transcription. In Saccharomyces cerevisiae (Baker's yeast), this protein is Transposon TyH3 Gag polyprotein (TY1A).